A 73-amino-acid polypeptide reads, in one-letter code: Omega-hexatoxin-Ar1b (73 aa).

A signal peptide spans 1-22 (MNTATGFIVLLVLATVLGCIEA). The propeptide occupies 23-37 (GESHVREDAMGRARR). 3 cysteine pairs are disulfide-bonded: Cys-40–Cys-54, Cys-47–Cys-58, and Cys-53–Cys-72.

It belongs to the neurotoxin 08 (Shiva) family. 01 (omega toxin) subfamily. As to expression, expressed by the venom gland.

It localises to the secreted. In terms of biological role, insecticidal toxin that reversibly and voltage-independently blocks both mid-low- (M-LVA) and high-voltage-activated (HVA) calcium channels (Cav) in cockroach DUM neurons. Also causes a modest block of insect sodium channel currents (Nav). Induces potent excitatory symptoms, followed by flaccid paralysis leading to death in house crickets. This Atrax robustus (Sydney funnel-web spider) protein is Omega-hexatoxin-Ar1b.